The following is a 625-amino-acid chain: Mesothelin (625 aa).

Positions 1–35 (MALPTARPLLGSCGSPICSRSFLLLLLSLGWIPRL) are cleaved as a signal peptide. An N-linked (GlcNAc...) asparagine glycan is attached at N93. S202 is modified (phosphoserine). A disulfide bridge connects residues C304 and C328. 3 N-linked (GlcNAc...) asparagine glycosylation sites follow: N390, N488, and N517. The GPI-anchor amidated serine moiety is linked to residue S600. A propeptide spans 601-625 (SRASLLGPGFVLIWIPALLPALRLS) (removed in mature form).

This sequence belongs to the mesothelin family. As to quaternary structure, interacts with MUC16. In terms of processing, proteolytically cleaved by a furin-like convertase to generate megakaryocyte-potentiating factor (MPF), and the cleaved form of mesothelin. Highly expressed in lung and heart. Expressed at low levels in spleen, liver, kidney and testis. Present in lung (at protein level).

It is found in the cell membrane. The protein resides in the golgi apparatus. It localises to the secreted. Membrane-anchored forms may play a role in cellular adhesion. Its function is as follows. Megakaryocyte-potentiating factor (MPF) may potentiate megakaryocyte colony formation. This Mus musculus (Mouse) protein is Mesothelin (Msln).